Consider the following 558-residue polypeptide: Dihydroxy-acid dehydratase (558 aa).

C48 contacts [2Fe-2S] cluster. D80 serves as a coordination point for Mg(2+). Position 121 (C121) interacts with [2Fe-2S] cluster. D122 and K123 together coordinate Mg(2+). An N6-carboxylysine modification is found at K123. C193 lines the [2Fe-2S] cluster pocket. E445 is a Mg(2+) binding site. The active-site Proton acceptor is the S471.

It belongs to the IlvD/Edd family. As to quaternary structure, homodimer. Requires [2Fe-2S] cluster as cofactor. Mg(2+) is required as a cofactor.

The catalysed reaction is (2R)-2,3-dihydroxy-3-methylbutanoate = 3-methyl-2-oxobutanoate + H2O. It carries out the reaction (2R,3R)-2,3-dihydroxy-3-methylpentanoate = (S)-3-methyl-2-oxopentanoate + H2O. It functions in the pathway amino-acid biosynthesis; L-isoleucine biosynthesis; L-isoleucine from 2-oxobutanoate: step 3/4. It participates in amino-acid biosynthesis; L-valine biosynthesis; L-valine from pyruvate: step 3/4. In terms of biological role, functions in the biosynthesis of branched-chain amino acids. Catalyzes the dehydration of (2R,3R)-2,3-dihydroxy-3-methylpentanoate (2,3-dihydroxy-3-methylvalerate) into 2-oxo-3-methylpentanoate (2-oxo-3-methylvalerate) and of (2R)-2,3-dihydroxy-3-methylbutanoate (2,3-dihydroxyisovalerate) into 2-oxo-3-methylbutanoate (2-oxoisovalerate), the penultimate precursor to L-isoleucine and L-valine, respectively. This is Dihydroxy-acid dehydratase from Prochlorococcus marinus (strain SARG / CCMP1375 / SS120).